Here is a 236-residue protein sequence, read N- to C-terminus: Peptidase E (236 aa).

Catalysis depends on charge relay system residues Ser-122, Asp-137, and His-159.

This sequence belongs to the peptidase S51 family.

It is found in the cytoplasm. The catalysed reaction is Dipeptidase E catalyzes the hydrolysis of dipeptides Asp-|-Xaa. It does not act on peptides with N-terminal Glu, Asn or Gln, nor does it cleave isoaspartyl peptides.. Hydrolyzes dipeptides containing N-terminal aspartate residues. May play a role in allowing the cell to use peptide aspartate to spare carbon otherwise required for the synthesis of the aspartate family of amino acids. This Shewanella sp. (strain MR-4) protein is Peptidase E.